A 247-amino-acid polypeptide reads, in one-letter code: Phosphoribosylaminoimidazole-succinocarboxamide synthase (247 aa).

It belongs to the SAICAR synthetase family.

The catalysed reaction is 5-amino-1-(5-phospho-D-ribosyl)imidazole-4-carboxylate + L-aspartate + ATP = (2S)-2-[5-amino-1-(5-phospho-beta-D-ribosyl)imidazole-4-carboxamido]succinate + ADP + phosphate + 2 H(+). It functions in the pathway purine metabolism; IMP biosynthesis via de novo pathway; 5-amino-1-(5-phospho-D-ribosyl)imidazole-4-carboxamide from 5-amino-1-(5-phospho-D-ribosyl)imidazole-4-carboxylate: step 1/2. The polypeptide is Phosphoribosylaminoimidazole-succinocarboxamide synthase (Herpetosiphon aurantiacus (strain ATCC 23779 / DSM 785 / 114-95)).